A 134-amino-acid polypeptide reads, in one-letter code: Profilin-1 (134 aa).

Cys13 and Cys118 are joined by a disulfide. An Involved in PIP2 interaction motif is present at residues 84 to 100 (AVIRGKKGSGGITIKKT). Thr114 is modified (phosphothreonine).

This sequence belongs to the profilin family. Occurs in many kinds of cells as a complex with monomeric actin in a 1:1 ratio. In terms of processing, phosphorylated by MAP kinases.

The protein resides in the cytoplasm. It localises to the cytoskeleton. In terms of biological role, binds to actin and affects the structure of the cytoskeleton. At high concentrations, profilin prevents the polymerization of actin, whereas it enhances it at low concentrations. By binding to PIP2, it inhibits the formation of IP3 and DG. In Olea europaea (Common olive), this protein is Profilin-1 (PRO1).